Consider the following 408-residue polypeptide: Myb/SANT-like DNA-binding domain-containing protein 4 (408 aa).

In terms of domain architecture, Myb-like spans 4–77 (LKRKRKSNFS…EVKRRYLDWR (74 aa)). The stretch at 236–367 (HLLVTLEKQK…IEKERLQDAL (132 aa)) forms a coiled coil.

This is Myb/SANT-like DNA-binding domain-containing protein 4 (msantd4) from Xenopus tropicalis (Western clawed frog).